Here is a 449-residue protein sequence, read N- to C-terminus: Tubulin beta chain (449 aa).

Residues glutamine 11, glutamate 71, serine 140, glycine 144, threonine 145, glycine 146, asparagine 206, and asparagine 228 each contribute to the GTP site. Glutamate 71 is a Mg(2+) binding site.

Belongs to the tubulin family. As to quaternary structure, dimer of alpha and beta chains. A typical microtubule is a hollow water-filled tube with an outer diameter of 25 nm and an inner diameter of 15 nM. Alpha-beta heterodimers associate head-to-tail to form protofilaments running lengthwise along the microtubule wall with the beta-tubulin subunit facing the microtubule plus end conferring a structural polarity. Microtubules usually have 13 protofilaments but different protofilament numbers can be found in some organisms and specialized cells. The cofactor is Mg(2+).

The protein localises to the cytoplasm. The protein resides in the cytoskeleton. Its function is as follows. Tubulin is the major constituent of microtubules, a cylinder consisting of laterally associated linear protofilaments composed of alpha- and beta-tubulin heterodimers. Microtubules grow by the addition of GTP-tubulin dimers to the microtubule end, where a stabilizing cap forms. Below the cap, tubulin dimers are in GDP-bound state, owing to GTPase activity of alpha-tubulin. The sequence is that of Tubulin beta chain (TUBB) from Cicer arietinum (Chickpea).